The chain runs to 87 residues: Small ribosomal subunit protein uS15c (87 aa).

This sequence belongs to the universal ribosomal protein uS15 family. In terms of assembly, part of the 30S ribosomal subunit.

The protein localises to the plastid. The protein resides in the chloroplast. This is Small ribosomal subunit protein uS15c (rps15) from Amborella trichopoda.